A 301-amino-acid polypeptide reads, in one-letter code: 3-methyl-2-oxobutanoate hydroxymethyltransferase (301 aa).

Residues 1-28 show a composition bias toward low complexity; the sequence is MATSNSSDSSMSAEVPAPYGNGPANAPA. Positions 1 to 37 are disordered; the sequence is MATSNSSDSSMSAEVPAPYGNGPANAPATPSDTAKKP. Mg(2+) contacts are provided by aspartate 82 and aspartate 121. 3-methyl-2-oxobutanoate contacts are provided by residues 82 to 83, aspartate 121, and lysine 151; that span reads DS. Position 153 (glutamate 153) interacts with Mg(2+). Glutamate 219 serves as the catalytic Proton acceptor.

It belongs to the PanB family. As to quaternary structure, homodecamer; pentamer of dimers. Requires Mg(2+) as cofactor.

It is found in the cytoplasm. It carries out the reaction 3-methyl-2-oxobutanoate + (6R)-5,10-methylene-5,6,7,8-tetrahydrofolate + H2O = 2-dehydropantoate + (6S)-5,6,7,8-tetrahydrofolate. It functions in the pathway cofactor biosynthesis; (R)-pantothenate biosynthesis; (R)-pantoate from 3-methyl-2-oxobutanoate: step 1/2. In terms of biological role, catalyzes the reversible reaction in which hydroxymethyl group from 5,10-methylenetetrahydrofolate is transferred onto alpha-ketoisovalerate to form ketopantoate. This Arthrobacter sp. (strain FB24) protein is 3-methyl-2-oxobutanoate hydroxymethyltransferase.